Reading from the N-terminus, the 318-residue chain is Homoserine kinase (318 aa).

Residue 97–107 coordinates ATP; it reads PIGSGLGSSAC.

This sequence belongs to the GHMP kinase family. Homoserine kinase subfamily.

It localises to the cytoplasm. It carries out the reaction L-homoserine + ATP = O-phospho-L-homoserine + ADP + H(+). It functions in the pathway amino-acid biosynthesis; L-threonine biosynthesis; L-threonine from L-aspartate: step 4/5. Catalyzes the ATP-dependent phosphorylation of L-homoserine to L-homoserine phosphate. The protein is Homoserine kinase of Vibrio atlanticus (strain LGP32) (Vibrio splendidus (strain Mel32)).